We begin with the raw amino-acid sequence, 747 residues long: Photosystem I P700 chlorophyll a apoprotein A2 (747 aa).

8 helical membrane passes run 46–69 (LFAT…FHIA), 135–158 (LFQG…LHLQ), 175–199 (LNHH…HVAI), 273–291 (IAHH…GHMY), 341–364 (LHFQ…QHMG), 380–406 (SALY…IFFV), 428–450 (ALIS…IYVH), and 530–548 (FLVH…LILI). [4Fe-4S] cluster-binding residues include Cys-572 and Cys-581. Transmembrane regions (helical) follow at residues 588–609 (ATYL…YWHW) and 656–678 (LSPW…MFLI). Positions 667, 675, and 683 each coordinate divinyl chlorophyll a. Residue Trp-684 participates in phylloquinone binding. A helical membrane pass occupies residues 720–740 (LVGLTHFTVGNFVTFGAFVIA).

The protein belongs to the PsaA/PsaB family. As to quaternary structure, the PsaA/B heterodimer binds the P700 divinyl chlorophyll special pair and subsequent electron acceptors. PSI consists of a core antenna complex that captures photons, and an electron transfer chain that converts photonic excitation into a charge separation. The cyanobacterial PSI reaction center is composed of one copy each of PsaA,B,C,D,E,F,I,J,K,L,M and X, and forms trimeric complexes. PSI electron transfer chain: 5 divinyl chlorophyll a, 1 divinyl chlorophyll a', 2 phylloquinones and 3 4Fe-4S clusters. PSI core antenna: 90 divinyl chlorophyll a, 22 carotenoids, 3 phospholipids and 1 galactolipid. P700 is a divinyl chlorophyll a/divinyl chlorophyll a' dimer, A0 is one or more divinyl chlorophyll a, A1 is one or both phylloquinones and FX is a shared 4Fe-4S iron-sulfur center. is required as a cofactor.

The protein localises to the cellular thylakoid membrane. The enzyme catalyses reduced [plastocyanin] + hnu + oxidized [2Fe-2S]-[ferredoxin] = oxidized [plastocyanin] + reduced [2Fe-2S]-[ferredoxin]. PsaA and PsaB bind P700, the primary electron donor of photosystem I (PSI), as well as the electron acceptors A0, A1 and FX. PSI is a plastocyanin/cytochrome c6-ferredoxin oxidoreductase, converting photonic excitation into a charge separation, which transfers an electron from the donor P700 chlorophyll pair to the spectroscopically characterized acceptors A0, A1, FX, FA and FB in turn. Oxidized P700 is reduced on the lumenal side of the thylakoid membrane by plastocyanin or cytochrome c6. The sequence is that of Photosystem I P700 chlorophyll a apoprotein A2 from Prochlorococcus marinus (strain SARG / CCMP1375 / SS120).